A 293-amino-acid polypeptide reads, in one-letter code: Protein nud-2 (293 aa).

Residues 36–147 (EIEKMMDSEL…EKIAMLESEL (112 aa)) adopt a coiled-coil conformation. The tract at residues 239 to 293 (KSQRVSTGTGAGACINRIVKDLMTKVERLDSILSTIRVSNNSSNNNSSHLTTTRA) is required for interaction with unc-83 isoform c.

It belongs to the nudE family. Component of a dynein-regulating complex composed of at least lis-1 and nud-2. Interacts with lis-1; the interaction is direct. Interacts (via C-terminus) with unc-83; the interaction is direct, and is required for recruitment of nud-2 to the nuclear envelope. Expressed in ventral cord neurons, the pharynx, seam cells of the hypodermis and in vulval muscle cells.

It localises to the nucleus envelope. Its function is as follows. Part of a complex with lis-1, which is recruited to the nuclear envelope by unc-83, where, in turn, it recruits dynein to the nuclear surface and regulates nuclear migration in hypodermal precursor cells. Plays a role in GABAergic synaptic vesicle localization in the ventral nerve cord. In Caenorhabditis elegans, this protein is Protein nud-2.